The sequence spans 360 residues: Histidinol-phosphate aminotransferase (360 aa).

Residue Lys-221 is modified to N6-(pyridoxal phosphate)lysine.

Belongs to the class-II pyridoxal-phosphate-dependent aminotransferase family. Histidinol-phosphate aminotransferase subfamily. As to quaternary structure, homodimer. It depends on pyridoxal 5'-phosphate as a cofactor.

The catalysed reaction is L-histidinol phosphate + 2-oxoglutarate = 3-(imidazol-4-yl)-2-oxopropyl phosphate + L-glutamate. It functions in the pathway amino-acid biosynthesis; L-histidine biosynthesis; L-histidine from 5-phospho-alpha-D-ribose 1-diphosphate: step 7/9. This chain is Histidinol-phosphate aminotransferase, found in Desulfitobacterium hafniense (strain Y51).